The primary structure comprises 460 residues: Bifunctional protein GlmU (460 aa).

Residues 1 to 228 (MKNYALVLAA…NSLAMGVNDL (228 aa)) are pyrophosphorylase. UDP-N-acetyl-alpha-D-glucosamine is bound by residues 8-11 (LAAG), K22, Q72, and 77-78 (GT). Mg(2+) is bound at residue D102. G139, E154, N169, and N226 together coordinate UDP-N-acetyl-alpha-D-glucosamine. Mg(2+) is bound at residue N226. The tract at residues 229-249 (YAISKAEKYLREYINKDHMLN) is linker. The segment at 250 to 460 (GVSMINPETI…LISPKPKKEE (211 aa)) is N-acetyltransferase. UDP-N-acetyl-alpha-D-glucosamine-binding residues include R331 and K349. The Proton acceptor role is filled by H361. Residues Y364 and N375 each coordinate UDP-N-acetyl-alpha-D-glucosamine. Acetyl-CoA contacts are provided by residues 384–385 (NY), A421, and R438.

This sequence in the N-terminal section; belongs to the N-acetylglucosamine-1-phosphate uridyltransferase family. In the C-terminal section; belongs to the transferase hexapeptide repeat family. Homotrimer. Requires Mg(2+) as cofactor.

Its subcellular location is the cytoplasm. The enzyme catalyses alpha-D-glucosamine 1-phosphate + acetyl-CoA = N-acetyl-alpha-D-glucosamine 1-phosphate + CoA + H(+). It carries out the reaction N-acetyl-alpha-D-glucosamine 1-phosphate + UTP + H(+) = UDP-N-acetyl-alpha-D-glucosamine + diphosphate. It participates in nucleotide-sugar biosynthesis; UDP-N-acetyl-alpha-D-glucosamine biosynthesis; N-acetyl-alpha-D-glucosamine 1-phosphate from alpha-D-glucosamine 6-phosphate (route II): step 2/2. Its pathway is nucleotide-sugar biosynthesis; UDP-N-acetyl-alpha-D-glucosamine biosynthesis; UDP-N-acetyl-alpha-D-glucosamine from N-acetyl-alpha-D-glucosamine 1-phosphate: step 1/1. It functions in the pathway bacterial outer membrane biogenesis; LPS lipid A biosynthesis. Catalyzes the last two sequential reactions in the de novo biosynthetic pathway for UDP-N-acetylglucosamine (UDP-GlcNAc). The C-terminal domain catalyzes the transfer of acetyl group from acetyl coenzyme A to glucosamine-1-phosphate (GlcN-1-P) to produce N-acetylglucosamine-1-phosphate (GlcNAc-1-P), which is converted into UDP-GlcNAc by the transfer of uridine 5-monophosphate (from uridine 5-triphosphate), a reaction catalyzed by the N-terminal domain. This Acholeplasma laidlawii (strain PG-8A) protein is Bifunctional protein GlmU.